The sequence spans 307 residues: Mitochondrial glycine transporter (307 aa).

Solcar repeat units lie at residues 8–87, 115–199, and 221–305; these read PRNS…MRSS, LTMY…SKQL, and TSTT…LVKR. 6 helical membrane-spanning segments follow: residues 14 to 39, 62 to 88, 121 to 146, 174 to 197, 225 to 251, and 280 to 298; these read LIGG…TRIQ, GTLP…RSSL, LLTG…VRYE, GFGA…EKSK, VNTT…KTRM, and GLSM…AWGI.

It belongs to the mitochondrial carrier (TC 2.A.29) family. SLC25A38 subfamily.

Its subcellular location is the mitochondrion. The protein localises to the mitochondrion inner membrane. The catalysed reaction is glycine(in) = glycine(out). Functionally, mitochondrial glycine transporter that imports glycine into the mitochondrial matrix. Plays an important role in providing glycine for the first enzymatic step in heme biosynthesis, the condensation of glycine with succinyl-CoA to produce 5-aminolevulinate (ALA) in the mitochondrial matrix. This is Mitochondrial glycine transporter from Saccharomyces cerevisiae (strain ATCC 204508 / S288c) (Baker's yeast).